The primary structure comprises 343 residues: Phosphatidylglycerol--prolipoprotein diacylglyceryl transferase 1 (343 aa).

4 helical membrane passes run 19-39, 54-74, 93-113, and 119-139; these read VPLRGYAFCIIIGVFVAVWLG, ADIAVWAVPFGLIGGRLYHVI, IWEGGLGIWGAIAFGAVGAWI, and GVPMPAYADAVAPGIALAQAI. Arg-141 lines the a 1,2-diacyl-sn-glycero-3-phospho-(1'-sn-glycerol) pocket. A run of 3 helical transmembrane segments spans residues 176 to 196, 202 to 224, and 238 to 258; these read HPTFLYESLWCIGVALLVIWA, LGHGRAFALYVAAYCAGRFWIEY, and LNNWTALFVFLLAVLYIVLSA. The interval 269-343 is disordered; the sequence is EPGAETAAGD…TNGADSAKKG (75 aa). A compositionally biased stretch (basic and acidic residues) spans 283–293; the sequence is ADKDVKGTKDA. Residues 314-324 are compositionally biased toward acidic residues; sequence APEDTSGADEA.

It belongs to the Lgt family.

The protein localises to the cell membrane. It catalyses the reaction L-cysteinyl-[prolipoprotein] + a 1,2-diacyl-sn-glycero-3-phospho-(1'-sn-glycerol) = an S-1,2-diacyl-sn-glyceryl-L-cysteinyl-[prolipoprotein] + sn-glycerol 1-phosphate + H(+). Its pathway is protein modification; lipoprotein biosynthesis (diacylglyceryl transfer). Functionally, catalyzes the transfer of the diacylglyceryl group from phosphatidylglycerol to the sulfhydryl group of the N-terminal cysteine of a prolipoprotein, the first step in the formation of mature lipoproteins. The chain is Phosphatidylglycerol--prolipoprotein diacylglyceryl transferase 1 from Streptomyces coelicolor (strain ATCC BAA-471 / A3(2) / M145).